Consider the following 238-residue polypeptide: tRNA (guanine-N(7)-)-methyltransferase (238 aa).

4 residues coordinate S-adenosyl-L-methionine: E68, E93, D120, and D143. D143 is an active-site residue. Substrate is bound by residues K147, D179, and 216–219 (TKFE).

It belongs to the class I-like SAM-binding methyltransferase superfamily. TrmB family.

The enzyme catalyses guanosine(46) in tRNA + S-adenosyl-L-methionine = N(7)-methylguanosine(46) in tRNA + S-adenosyl-L-homocysteine. It participates in tRNA modification; N(7)-methylguanine-tRNA biosynthesis. Catalyzes the formation of N(7)-methylguanine at position 46 (m7G46) in tRNA. This chain is tRNA (guanine-N(7)-)-methyltransferase, found in Aliivibrio fischeri (strain MJ11) (Vibrio fischeri).